The chain runs to 1190 residues: ATPase histone chaperone abo1 (1190 aa).

Basic and acidic residues predominate over residues 1 to 11; sequence MKEEASEHGGS. 2 disordered regions span residues 1-185 and 204-253; these read MKEE…RKTH and YIDS…DLAD. Composition is skewed to acidic residues over residues 52–62 and 82–106; these read QEDEGDEDWEE and SEGDDEPFEVSESSALEDELSDSED. Over residues 112-131 the composition is skewed to basic residues; the sequence is VRSKPKYKPGTRRSTRLRNR. Over residues 141–152 the composition is skewed to basic and acidic residues; that stretch reads EEHRPILRERTS. Residue 309-314 coordinates ATP; that stretch reads PGTGKT. The region spanning 794 to 922 is the Bromo domain; the sequence is RLLNKLKIKL…ANVLLGVEDM (129 aa).

It belongs to the AAA ATPase family. As to quaternary structure, homohexamer. Interacts with the FACT complex subunits spt16 and pob3. Interacts with histone H3-H4 (via N-terminus).

It is found in the nucleus. The protein resides in the chromosome. The catalysed reaction is ATP + H2O = ADP + phosphate + H(+). Functionally, ATPase histone chaperone which facilitates loading of histone H3-H4 onto DNA in an ATP-dependent manner. Plays a genome-wide role in nucleosome organization and establishment of chromatin. Also plays a role in heterochromatin assembly by stabilizing recruitment of the histone methyltransferase clr4 to methylated histone H3, to promote the transition from H3K9me2 to H3K9me3. The protein is ATPase histone chaperone abo1 of Schizosaccharomyces pombe (strain 972 / ATCC 24843) (Fission yeast).